A 695-amino-acid chain; its full sequence is MAP kinase phosphatase with leucine-rich repeats protein 2 (695 aa).

10 LRR repeats span residues 101–122 (SLKS…ITLL), 124–145 (NLNH…LSQL), 147–167 (SLET…NVCK), 170–191 (SLTS…FLNL), 193–214 (NLKD…LPNN), 215–235 (IEKL…SLIR), 239–260 (SLTT…LSCL), 262–283 (NVKT…VLGS), 286–307 (SLVT…VILL), and 309–330 (NLRI…IPTE). Positions 413-426 (SENNEINENNQLLT) are enriched in low complexity. Disordered stretches follow at residues 413–438 (SENN…KNDS) and 492–519 (QEQL…QQQQ). In terms of domain architecture, Tyrosine-protein phosphatase spans 556 to 695 (VPDLIIDKLY…LKKFEKDLFK (140 aa)). C639 (phosphocysteine intermediate) is an active-site residue.

The protein belongs to the protein-tyrosine phosphatase family. Non-receptor class dual specificity subfamily.

The catalysed reaction is O-phospho-L-tyrosyl-[protein] + H2O = L-tyrosyl-[protein] + phosphate. It catalyses the reaction O-phospho-L-seryl-[protein] + H2O = L-seryl-[protein] + phosphate. It carries out the reaction O-phospho-L-threonyl-[protein] + H2O = L-threonyl-[protein] + phosphate. Its function is as follows. Probable phosphatase with dual specificity toward Ser/Thr and Tyr-containing proteins. This chain is MAP kinase phosphatase with leucine-rich repeats protein 2 (mpl2), found in Dictyostelium discoideum (Social amoeba).